A 342-amino-acid chain; its full sequence is N-acetyl-gamma-glutamyl-phosphate reductase (342 aa).

Cys147 is a catalytic residue.

This sequence belongs to the NAGSA dehydrogenase family. Type 1 subfamily.

Its subcellular location is the cytoplasm. The enzyme catalyses N-acetyl-L-glutamate 5-semialdehyde + phosphate + NADP(+) = N-acetyl-L-glutamyl 5-phosphate + NADPH + H(+). It participates in amino-acid biosynthesis; L-arginine biosynthesis; N(2)-acetyl-L-ornithine from L-glutamate: step 3/4. Catalyzes the NADPH-dependent reduction of N-acetyl-5-glutamyl phosphate to yield N-acetyl-L-glutamate 5-semialdehyde. In Campylobacter jejuni subsp. doylei (strain ATCC BAA-1458 / RM4099 / 269.97), this protein is N-acetyl-gamma-glutamyl-phosphate reductase.